A 1343-amino-acid chain; its full sequence is DNA-directed RNA polymerase subunit beta (1343 aa).

This sequence belongs to the RNA polymerase beta chain family. In terms of assembly, the RNAP catalytic core consists of 2 alpha, 1 beta, 1 beta' and 1 omega subunit. When a sigma factor is associated with the core the holoenzyme is formed, which can initiate transcription.

It carries out the reaction RNA(n) + a ribonucleoside 5'-triphosphate = RNA(n+1) + diphosphate. DNA-dependent RNA polymerase catalyzes the transcription of DNA into RNA using the four ribonucleoside triphosphates as substrates. The protein is DNA-directed RNA polymerase subunit beta of Shewanella sp. (strain W3-18-1).